Consider the following 260-residue polypeptide: Membrane protein insertase YidC 1 (260 aa).

Residues methionine 1–glycine 22 form the signal peptide. Cysteine 23 carries the N-palmitoyl cysteine lipid modification. A lipid anchor (S-diacylglycerol cysteine) is attached at cysteine 23. The next 5 helical transmembrane spans lie at isoleucine 29 to isoleucine 49, valine 52 to isoleucine 72, leucine 133 to isoleucine 153, phenylalanine 164 to leucine 184, and methionine 213 to isoleucine 233.

The protein belongs to the OXA1/ALB3/YidC family. Type 2 subfamily.

It localises to the cell membrane. Its function is as follows. Required for the insertion and/or proper folding and/or complex formation of integral membrane proteins into the membrane. Involved in integration of membrane proteins that insert both dependently and independently of the Sec translocase complex, as well as at least some lipoproteins. In Bacillus cereus (strain ATCC 14579 / DSM 31 / CCUG 7414 / JCM 2152 / NBRC 15305 / NCIMB 9373 / NCTC 2599 / NRRL B-3711), this protein is Membrane protein insertase YidC 1.